The primary structure comprises 252 residues: Small ribosomal subunit protein uS3 (252 aa).

Residues 39-109 (IRNYVNTRLK…EVKIDVVEVV (71 aa)) form the KH type-2 domain. Basic and acidic residues predominate over residues 222-240 (MKKIRDRRNDQRSRGGRDS). A disordered region spans residues 222 to 252 (MKKIRDRRNDQRSRGGRDSRNKRRRRPKNTA). A compositionally biased stretch (basic residues) spans 241 to 252 (RNKRRRRPKNTA).

The protein belongs to the universal ribosomal protein uS3 family. In terms of assembly, part of the 30S ribosomal subunit. Forms a tight complex with proteins S10 and S14.

Its function is as follows. Binds the lower part of the 30S subunit head. Binds mRNA in the 70S ribosome, positioning it for translation. This Chlorobium phaeobacteroides (strain BS1) protein is Small ribosomal subunit protein uS3.